Reading from the N-terminus, the 244-residue chain is Large ribosomal subunit protein uL30w (244 aa).

It belongs to the universal ribosomal protein uL30 family.

The polypeptide is Large ribosomal subunit protein uL30w (RPL7D) (Arabidopsis thaliana (Mouse-ear cress)).